The chain runs to 165 residues: Large ribosomal subunit protein uL22c (165 aa).

The protein belongs to the universal ribosomal protein uL22 family. As to quaternary structure, part of the 50S ribosomal subunit.

The protein localises to the plastid. It localises to the chloroplast. Functionally, this protein binds specifically to 23S rRNA. In terms of biological role, the globular domain of the protein is located near the polypeptide exit tunnel on the outside of the subunit, while an extended beta-hairpin is found that lines the wall of the exit tunnel in the center of the 70S ribosome. The protein is Large ribosomal subunit protein uL22c (rpl22) of Daucus carota (Wild carrot).